The sequence spans 359 residues: Chorismate synthase (359 aa).

2 residues coordinate NADP(+): arginine 48 and arginine 54. Residues arginine 129 to serine 131, asparagine 241 to alanine 242, glycine 285, lysine 300 to serine 304, and arginine 326 each bind FMN.

Belongs to the chorismate synthase family. As to quaternary structure, homotetramer. FMNH2 serves as cofactor.

The catalysed reaction is 5-O-(1-carboxyvinyl)-3-phosphoshikimate = chorismate + phosphate. Its pathway is metabolic intermediate biosynthesis; chorismate biosynthesis; chorismate from D-erythrose 4-phosphate and phosphoenolpyruvate: step 7/7. Its function is as follows. Catalyzes the anti-1,4-elimination of the C-3 phosphate and the C-6 proR hydrogen from 5-enolpyruvylshikimate-3-phosphate (EPSP) to yield chorismate, which is the branch point compound that serves as the starting substrate for the three terminal pathways of aromatic amino acid biosynthesis. This reaction introduces a second double bond into the aromatic ring system. This chain is Chorismate synthase, found in Afipia carboxidovorans (strain ATCC 49405 / DSM 1227 / KCTC 32145 / OM5) (Oligotropha carboxidovorans).